The chain runs to 921 residues: Short transient receptor potential channel 3 (921 aa).

A disordered region spans residues 1–73 (MSTKVRKCKE…PPFSHGPDLS (73 aa)). Topologically, residues 1-459 (MSTKVRKCKE…KILRSPFMKF (459 aa)) are cytoplasmic. Over residues 19–31 (PEEEEDEGEDEGA) the composition is skewed to acidic residues. ANK repeat units lie at residues 111–140 (AEEE…TLNV), 146–175 (MGQN…LARI), 177–203 (DALL…FAAS), and 232–261 (PDIT…RIER). Glu-158 contacts Ca(2+). The chain crosses the membrane as a helical span at residues 460–477 (VAHAASFIIFLGLLVFNA). Topologically, residues 478–508 (SDRFEGITTLPNITVTDYPKQIFRVKTTQFT) are extracellular. N-linked (GlcNAc...) asparagine glycosylation is present at Asn-489. Residues 509–527 (WTEMLIMVWVLGMMWSECK) traverse the membrane as a helical segment. Ca(2+) is bound by residues Glu-525, Glu-528, and Asn-543. The Cytoplasmic segment spans residues 528 to 540 (ELWLEGPREYILQ). The helical transmembrane segment at 541–562 (LWNVLDFGMLSIFIAAFTARFL) threads the bilayer. Topologically, residues 563–606 (AFLQATKAQQYVDSYVQESDLSEVTLPPEIQYFTYARDKWLPSD) are extracellular. A helical membrane pass occupies residues 607 to 630 (PQIISEGLYAIAVVLSFSRIAYIL). Topologically, residues 631–649 (PANESFGPLQISLGRTVKD) are cytoplasmic. One copy of the ANK 5 repeat lies at 634 to 663 (ESFGPLQISLGRTVKDIFKFMVLFIMVFFA). A helical membrane pass occupies residues 650–673 (IFKFMVLFIMVFFAFMIGMFILYS). Topologically, residues 674 to 713 (YYLGAKVNAAFTTVEESFKTLFWSIFGLSEVTSVVLKYDH) are extracellular. The chain crosses the membrane as a helical span at residues 714-739 (KFIENIGYVLYGIYNVTMVVVLLNML). The Cytoplasmic segment spans residues 740–921 (IAMINSSYQE…KLNPSMLRCE (182 aa)). Residues 850-870 (QIMKRLIKRYVLKAQVDKEND) are binds to IP3R3. Glu-871, Glu-874, Glu-876, and Asp-883 together coordinate Ca(2+).

This sequence belongs to the transient receptor (TC 1.A.4) family. STrpC subfamily. TRPC3 sub-subfamily. Homotetramer. Interacts with ITPR1. Interacts with ITPR3. Interacts with MX1. Interacts with RNF24. Interacts with JPH2; the interaction is involved in maintaining Ca(2+) homeostasis in skeletal muscle and is mediated by JPH2 'Ser-165' phosphorylation. As to quaternary structure, interacts with isoform short of TRPC1. Expressed predominantly in brain and at much lower levels in ovary, colon, small intestine, lung, prostate, placenta and testis.

The protein resides in the cell membrane. The enzyme catalyses Ca(2+)(in) = Ca(2+)(out). With respect to regulation, activated by diacylglycerol (DAG) in a membrane-delimited fashion, independently of protein kinase C. Activated by inositol 1,4,5-triphosphate receptors (ITPR) with bound IP3. May be activated by internal calcium store depletion. Inhibited by intracellular Ca(2+). Forms a receptor-activated non-selective calcium permeant cation channel. Functionally, forms a receptor-activated non-selective calcium permeant cation channel. May be operated by a phosphatidylinositol second messenger system activated by receptor tyrosine kinases or G-protein coupled receptors. In Homo sapiens (Human), this protein is Short transient receptor potential channel 3 (TRPC3).